The chain runs to 283 residues: ATP phosphoribosyltransferase (283 aa).

Belongs to the ATP phosphoribosyltransferase family. Long subfamily. The cofactor is Mg(2+).

The protein resides in the cytoplasm. The catalysed reaction is 1-(5-phospho-beta-D-ribosyl)-ATP + diphosphate = 5-phospho-alpha-D-ribose 1-diphosphate + ATP. It participates in amino-acid biosynthesis; L-histidine biosynthesis; L-histidine from 5-phospho-alpha-D-ribose 1-diphosphate: step 1/9. Feedback inhibited by histidine. In terms of biological role, catalyzes the condensation of ATP and 5-phosphoribose 1-diphosphate to form N'-(5'-phosphoribosyl)-ATP (PR-ATP). Has a crucial role in the pathway because the rate of histidine biosynthesis seems to be controlled primarily by regulation of HisG enzymatic activity. In Bacteroides thetaiotaomicron (strain ATCC 29148 / DSM 2079 / JCM 5827 / CCUG 10774 / NCTC 10582 / VPI-5482 / E50), this protein is ATP phosphoribosyltransferase.